A 655-amino-acid chain; its full sequence is MGKIKELQTSLANKIAAGEVVERPGSVVKELLENAIDAQATEINIEVEQSGVASIRVVDNGTGIHIDDLGLVFHRHATSKLDADDDLFHIRTLGFRGEALASISSVAKVTLSTCTDNEEGQQIYVENGEILDQKPAKAKRGTDILVESLFYNTPARLKYIKSLYTELGKITDIVNRMAMSHPDIRISLISDGKTIMKTNGSGRTNEVMSEIYGMKVAKDLVHISGDTSDYHLEGFVAKPEHSRSNKHYISIFINGRYIKNFLLNKAILEGYHTLLMIGRYPICYINIEMDPILVDVNVHPTKLEVRLSKEDQLFNLIVEKIREAFKDRILIPQNDMDKITKKNKVLDQFEQQKLDFEKKQQQENHSQPVNSHEEDEKNDDKAYHSSQTHYEPTDYILKEENNTSVSTSPNSDDDYTQTQKSVLYDLENENQSEFINEADFDSDISNHSDSDIKGSVSKDPSRRVPYMEVVGQVHGTYIIAQNENGMYMIDQHAAQERIKYEYFREKIGEVTNEIQNLLIPLTFHFSTDELMIINQHKEELDKVGVHLEPFGGNDYIVDSYPVWFPTAEAEEIIKDMIEYVLEHKKVNVKKIREDAAIMMSCKKSIKANHYLKNNEMADLVNQLRETEDPFTCPHGRPIIINFSNYELERLFKRTI.

Disordered regions lie at residues 357–416 (EKKQ…DDYT) and 439–460 (DFDS…SKDP). Basic and acidic residues predominate over residues 371–383 (SHEEDEKNDDKAY). Polar residues predominate over residues 402–416 (NTSVSTSPNSDDDYT).

It belongs to the DNA mismatch repair MutL/HexB family.

Its function is as follows. This protein is involved in the repair of mismatches in DNA. It is required for dam-dependent methyl-directed DNA mismatch repair. May act as a 'molecular matchmaker', a protein that promotes the formation of a stable complex between two or more DNA-binding proteins in an ATP-dependent manner without itself being part of a final effector complex. The chain is DNA mismatch repair protein MutL from Staphylococcus saprophyticus subsp. saprophyticus (strain ATCC 15305 / DSM 20229 / NCIMB 8711 / NCTC 7292 / S-41).